The following is a 295-amino-acid chain: ATP synthase gamma chain (295 aa).

It belongs to the ATPase gamma chain family. F-type ATPases have 2 components, CF(1) - the catalytic core - and CF(0) - the membrane proton channel. CF(1) has five subunits: alpha(3), beta(3), gamma(1), delta(1), epsilon(1). CF(0) has three main subunits: a, b and c.

It localises to the cell inner membrane. Functionally, produces ATP from ADP in the presence of a proton gradient across the membrane. The gamma chain is believed to be important in regulating ATPase activity and the flow of protons through the CF(0) complex. This chain is ATP synthase gamma chain, found in Campylobacter fetus subsp. fetus (strain 82-40).